We begin with the raw amino-acid sequence, 419 residues long: Imidazolonepropionase (419 aa).

The Fe(3+) site is built by His87 and His89. 2 residues coordinate Zn(2+): His87 and His89. Positions 96, 159, and 192 each coordinate 4-imidazolone-5-propanoate. Tyr159 lines the N-formimidoyl-L-glutamate pocket. Fe(3+) is bound at residue His257. His257 serves as a coordination point for Zn(2+). Gln260 serves as a coordination point for 4-imidazolone-5-propanoate. Asp332 contributes to the Fe(3+) binding site. Zn(2+) is bound at residue Asp332. N-formimidoyl-L-glutamate is bound by residues Asn334 and Gly336. 4-imidazolone-5-propanoate is bound at residue Ser337.

It belongs to the metallo-dependent hydrolases superfamily. HutI family. The cofactor is Zn(2+). Fe(3+) serves as cofactor.

It localises to the cytoplasm. The enzyme catalyses 4-imidazolone-5-propanoate + H2O = N-formimidoyl-L-glutamate. It participates in amino-acid degradation; L-histidine degradation into L-glutamate; N-formimidoyl-L-glutamate from L-histidine: step 3/3. Its function is as follows. Catalyzes the hydrolytic cleavage of the carbon-nitrogen bond in imidazolone-5-propanoate to yield N-formimidoyl-L-glutamate. It is the third step in the universal histidine degradation pathway. The chain is Imidazolonepropionase from Alteromonas mediterranea (strain DSM 17117 / CIP 110805 / LMG 28347 / Deep ecotype).